Reading from the N-terminus, the 150-residue chain is Ribosomal RNA large subunit methyltransferase H (150 aa).

Residues I71, A100, and 118–123 (LSEMTF) contribute to the S-adenosyl-L-methionine site.

This sequence belongs to the RNA methyltransferase RlmH family. As to quaternary structure, homodimer.

It localises to the cytoplasm. It catalyses the reaction pseudouridine(1915) in 23S rRNA + S-adenosyl-L-methionine = N(3)-methylpseudouridine(1915) in 23S rRNA + S-adenosyl-L-homocysteine + H(+). Its function is as follows. Specifically methylates the pseudouridine at position 1915 (m3Psi1915) in 23S rRNA. In Helicobacter acinonychis (strain Sheeba), this protein is Ribosomal RNA large subunit methyltransferase H.